Here is a 308-residue protein sequence, read N- to C-terminus: N-acetylneuraminate lyase (308 aa).

Threonine 50 and threonine 51 together coordinate aceneuramate. Catalysis depends on tyrosine 142, which acts as the Proton donor. Lysine 172 functions as the Schiff-base intermediate with substrate in the catalytic mechanism. The aceneuramate site is built by serine 174, glycine 198, aspartate 200, glutamate 201, and serine 217.

It belongs to the DapA family. NanA subfamily. As to quaternary structure, homotetramer.

It is found in the cytoplasm. It carries out the reaction aceneuramate = aldehydo-N-acetyl-D-mannosamine + pyruvate. Its pathway is amino-sugar metabolism; N-acetylneuraminate degradation. Catalyzes the cleavage of N-acetylneuraminic acid (sialic acid) to form pyruvate and N-acetylmannosamine via a Schiff base intermediate. It prevents sialic acids from being recycled and returning to the cell surface. Involved in the N-glycolylneuraminic acid (Neu5Gc) degradation pathway. The chain is N-acetylneuraminate lyase from Gallus gallus (Chicken).